Consider the following 395-residue polypeptide: Renin (395 aa).

The first 21 residues, 1–21 (MLRSWEFVLLISCFLCFSSDA), serve as a signal peptide directing secretion. Positions 22–43 (LQRISLKKMPSIRETLQEMGMK) are cleaved as a propeptide — activation peptide. N-linked (GlcNAc...) asparagine glycosylation is present at N64. A Peptidase A1 domain is found at 79 to 392 (YYGEISIGTP…DRQNNRIGFA (314 aa)). D97 is a catalytic residue. Cystine bridges form between C110/C117 and C274/C278. D283 is a catalytic residue. A disulfide bridge connects residues C316 and C351.

Belongs to the peptidase A1 family. N-glycosylated. As to expression, expressed by the venom gland (at protein level).

The protein localises to the secreted. It carries out the reaction Cleavage of Leu-|-Xaa bond in angiotensinogen to generate angiotensin I.. With respect to regulation, inhibited completely by aspartyl protease inhibitor pepstatin A, but not by the serine- or metalloproteinase inhibitors PMSF or EDTA. Its function is as follows. Renin is a highly specific endopeptidase, whose only known function is to generate angiotensin I from angiotensinogen in the plasma, initiating a cascade of reactions that produce an elevation of blood pressure and increased sodium retention by the kidney. This protein is also found in snake venom and shown to specifically cleave human and porcine angiotensinogen into angiotensin I. It does not have general protease activity, no cleavage of alpha or beta casein. May be directly responsible for elevation of blood pressure in the victims of envenomation. The chain is Renin from Echis ocellatus (Ocellated saw-scaled viper).